Reading from the N-terminus, the 20-residue chain is T cell receptor alpha joining 42 (20 aa).

A disordered region spans residues 1-20 (YGGSQGNLIFGKGTKLSVKP).

As to quaternary structure, alpha-beta TR is a heterodimer composed of an alpha and beta chain; disulfide-linked. The alpha-beta TR is associated with the transmembrane signaling CD3 coreceptor proteins to form the TR-CD3 (TcR or TCR). The assembly of alpha-beta TR heterodimers with CD3 occurs in the endoplasmic reticulum where a single alpha-beta TR heterodimer associates with one CD3D-CD3E heterodimer, one CD3G-CD3E heterodimer and one CD247 homodimer forming a stable octameric structure. CD3D-CD3E and CD3G-CD3E heterodimers preferentially associate with TR alpha and TR beta chains, respectively. The association of the CD247 homodimer is the last step of TcR assembly in the endoplasmic reticulum and is required for transport to the cell surface.

The protein localises to the cell membrane. J region of the variable domain of T cell receptor (TR) alpha chain that participates in the antigen recognition. Alpha-beta T cell receptors are antigen specific receptors which are essential to the immune response and are present on the cell surface of T lymphocytes. Recognize peptide-major histocompatibility (MH) (pMH) complexes that are displayed by antigen presenting cells (APC), a prerequisite for efficient T cell adaptive immunity against pathogens. Binding of alpha-beta TR to pMH complex initiates TR-CD3 clustering on the cell surface and intracellular activation of LCK that phosphorylates the ITAM motifs of CD3G, CD3D, CD3E and CD247 enabling the recruitment of ZAP70. In turn, ZAP70 phosphorylates LAT, which recruits numerous signaling molecules to form the LAT signalosome. The LAT signalosome propagates signal branching to three major signaling pathways, the calcium, the mitogen-activated protein kinase (MAPK) kinase and the nuclear factor NF-kappa-B (NF-kB) pathways, leading to the mobilization of transcription factors that are critical for gene expression and essential for T cell growth and differentiation. The T cell repertoire is generated in the thymus, by V-(D)-J rearrangement. This repertoire is then shaped by intrathymic selection events to generate a peripheral T cell pool of self-MH restricted, non-autoaggressive T cells. Post-thymic interaction of alpha-beta TR with the pMH complexes shapes TR structural and functional avidity. In Homo sapiens (Human), this protein is T cell receptor alpha joining 42.